We begin with the raw amino-acid sequence, 552 residues long: Non-structural protein NS1 (552 aa).

This sequence belongs to the orbivirus non-structural protein NS1 family.

This chain is Non-structural protein NS1 (Segment-5), found in Bluetongue virus 1 (isolate Australia) (BTV 1).